Here is a 61-residue protein sequence, read N- to C-terminus: Potassium channel toxin alpha-KTx 6.7 (61 aa).

Positions 1-23 (MNAKFILLLLVVTTTMLLPDTQG) are cleaved as a signal peptide. Intrachain disulfides connect cysteine 29/cysteine 50, cysteine 35/cysteine 55, cysteine 39/cysteine 57, and cysteine 45/cysteine 60. A Cysteine amide modification is found at cysteine 60.

The protein belongs to the short scorpion toxin superfamily. Potassium channel inhibitor family. Alpha-KTx 06 subfamily. In terms of tissue distribution, expressed by the venom gland.

Its subcellular location is the secreted. Functionally, blocker of voltage-gated potassium channels. The protein is Potassium channel toxin alpha-KTx 6.7 of Opistophthalmus carinatus (African yellow leg scorpion).